The chain runs to 306 residues: uncharacterized protein (306 aa).

This is an uncharacterized protein from Saccharomyces cerevisiae (strain ATCC 204508 / S288c) (Baker's yeast).